The following is a 342-amino-acid chain: Elongation factor Ts (342 aa).

Positions 80–83 are involved in Mg(2+) ion dislocation from EF-Tu; that stretch reads TDFV.

Belongs to the EF-Ts family.

The protein resides in the cytoplasm. Associates with the EF-Tu.GDP complex and induces the exchange of GDP to GTP. It remains bound to the aminoacyl-tRNA.EF-Tu.GTP complex up to the GTP hydrolysis stage on the ribosome. The sequence is that of Elongation factor Ts from Lactobacillus delbrueckii subsp. bulgaricus (strain ATCC 11842 / DSM 20081 / BCRC 10696 / JCM 1002 / NBRC 13953 / NCIMB 11778 / NCTC 12712 / WDCM 00102 / Lb 14).